The chain runs to 98 residues: UPF0251 protein Sputcn32_0687 (98 aa).

Belongs to the UPF0251 family.

This is UPF0251 protein Sputcn32_0687 from Shewanella putrefaciens (strain CN-32 / ATCC BAA-453).